The primary structure comprises 144 residues: Large ribosomal subunit protein uL11 (144 aa).

This sequence belongs to the universal ribosomal protein uL11 family. Part of the ribosomal stalk of the 50S ribosomal subunit. Interacts with L10 and the large rRNA to form the base of the stalk. L10 forms an elongated spine to which L12 dimers bind in a sequential fashion forming a multimeric L10(L12)X complex. In terms of processing, one or more lysine residues are methylated.

In terms of biological role, forms part of the ribosomal stalk which helps the ribosome interact with GTP-bound translation factors. In Deinococcus deserti (strain DSM 17065 / CIP 109153 / LMG 22923 / VCD115), this protein is Large ribosomal subunit protein uL11.